The chain runs to 118 residues: Large ribosomal subunit protein bL20 (118 aa).

Belongs to the bacterial ribosomal protein bL20 family.

Functionally, binds directly to 23S ribosomal RNA and is necessary for the in vitro assembly process of the 50S ribosomal subunit. It is not involved in the protein synthesizing functions of that subunit. This chain is Large ribosomal subunit protein bL20, found in Photorhabdus laumondii subsp. laumondii (strain DSM 15139 / CIP 105565 / TT01) (Photorhabdus luminescens subsp. laumondii).